The sequence spans 103 residues: Putative membrane protein insertion efficiency factor (103 aa).

This sequence belongs to the UPF0161 family.

The protein resides in the cell inner membrane. In terms of biological role, could be involved in insertion of integral membrane proteins into the membrane. The polypeptide is Putative membrane protein insertion efficiency factor (Chlamydia felis (strain Fe/C-56) (Chlamydophila felis)).